The following is a 312-amino-acid chain: Olfactory receptor 2J1 (312 aa).

Topologically, residues Met-1 to Val-26 are extracellular. The N-linked (GlcNAc...) asparagine glycan is linked to Asn-6. The helical transmembrane segment at Val-27–Ser-50 threads the bilayer. Over Tyr-51–Thr-58 the chain is Cytoplasmic. A helical transmembrane segment spans residues Pro-59–Pro-80. At Gln-81–Gln-101 the chain is on the extracellular side. Cysteines 98 and 190 form a disulfide. Residues Leu-102–Tyr-121 form a helical membrane-spanning segment. Residues Asp-122–Arg-140 lie on the Cytoplasmic side of the membrane. Residues Phe-141–Leu-159 form a helical membrane-spanning segment. Over His-160 to Asn-196 the chain is Extracellular. A helical membrane pass occupies residues Glu-197–Gly-220. Over Ala-221–Lys-237 the chain is Cytoplasmic. The chain crosses the membrane as a helical span at residues Val-238–Tyr-260. Over Leu-261 to Lys-273 the chain is Extracellular. Residues Phe-274–Phe-293 traverse the membrane as a helical segment. At Arg-294–Met-312 the chain is on the cytoplasmic side.

It belongs to the G-protein coupled receptor 1 family.

It localises to the cell membrane. Functionally, odorant receptor. The sequence is that of Olfactory receptor 2J1 (OR2J1) from Homo sapiens (Human).